The chain runs to 125 residues: Fumarate reductase subunit D (125 aa).

The next 3 helical transmembrane spans lie at 29–49 (VTAL…PLGW), 64–84 (NPIT…HAAH), and 102–122 (VIAL…GWML).

This sequence belongs to the FrdD family. Part of an enzyme complex containing four subunits: a flavoprotein (FrdA), an iron-sulfur protein (FrdB), and two hydrophobic anchor proteins (FrdC and FrdD).

The protein resides in the cell membrane. In terms of biological role, anchors the catalytic components of the fumarate reductase complex to the cell membrane, binds quinones. The chain is Fumarate reductase subunit D from Mycobacterium bovis (strain BCG / Tokyo 172 / ATCC 35737 / TMC 1019).